We begin with the raw amino-acid sequence, 76 residues long: Large ribosomal subunit protein bL31 (76 aa).

C16, C18, C37, and C40 together coordinate Zn(2+).

This sequence belongs to the bacterial ribosomal protein bL31 family. Type A subfamily. As to quaternary structure, part of the 50S ribosomal subunit. The cofactor is Zn(2+).

Functionally, binds the 23S rRNA. In Solibacter usitatus (strain Ellin6076), this protein is Large ribosomal subunit protein bL31.